The sequence spans 942 residues: tRNAse Z TRZ4, mitochondrial (942 aa).

The transit peptide at 1-50 directs the protein to the mitochondrion; it reads MLTSSMPQNLSLFGFSPLKSSSFALILRPFSLYPPIFASSSPAPSRRPPR. Residues 38–85 form a disordered region; that stretch reads ASSSPAPSRRPPRTAGYRRSGPSPPRRKWSSFEEQKRKGRSPMEKDKA. Basic and acidic residues predominate over residues 67-85; the sequence is SSFEEQKRKGRSPMEKDKA.

Belongs to the RNase Z family. Homodimer. Zn(2+) is required as a cofactor. Ca(2+) serves as cofactor. The cofactor is Mn(2+). Requires Mg(2+) as cofactor.

It localises to the mitochondrion. It carries out the reaction Endonucleolytic cleavage of RNA, removing extra 3' nucleotides from tRNA precursor, generating 3' termini of tRNAs. A 3'-hydroxy group is left at the tRNA terminus and a 5'-phosphoryl group is left at the trailer molecule.. Functionally, zinc phosphodiesterase, which displays tRNA 3'-processing endonuclease activity. Involved in tRNA maturation, by removing a 3'-trailer from precursor tRNA. Can process the mitochondrial tRNA-like structures (t-elements). This is tRNAse Z TRZ4, mitochondrial from Arabidopsis thaliana (Mouse-ear cress).